A 503-amino-acid chain; its full sequence is Cobyric acid synthase (503 aa).

Residues Asp-251 to Phe-450 form the GATase cobBQ-type domain. The active-site Nucleophile is Cys-331. The active site involves His-442.

It belongs to the CobB/CobQ family. CobQ subfamily.

It functions in the pathway cofactor biosynthesis; adenosylcobalamin biosynthesis. Catalyzes amidations at positions B, D, E, and G on adenosylcobyrinic A,C-diamide. NH(2) groups are provided by glutamine, and one molecule of ATP is hydrogenolyzed for each amidation. The chain is Cobyric acid synthase from Dehalococcoides mccartyi (strain ATCC BAA-2100 / JCM 16839 / KCTC 5957 / BAV1).